The sequence spans 201 residues: GTP cyclohydrolase 1 (201 aa).

The Zn(2+) site is built by C90, H93, and C163.

The protein belongs to the GTP cyclohydrolase I family. In terms of assembly, toroid-shaped homodecamer, composed of two pentamers of five dimers.

It carries out the reaction GTP + H2O = 7,8-dihydroneopterin 3'-triphosphate + formate + H(+). Its pathway is cofactor biosynthesis; 7,8-dihydroneopterin triphosphate biosynthesis; 7,8-dihydroneopterin triphosphate from GTP: step 1/1. The protein is GTP cyclohydrolase 1 (folE) of Streptomyces coelicolor (strain ATCC BAA-471 / A3(2) / M145).